The following is a 219-amino-acid chain: Leukocyte surface antigen CD53 (219 aa).

Residues 1–11 (MGMSSLKLLKY) lie on the Cytoplasmic side of the membrane. Residues 12-32 (VLFIFNLLFWVCGCCILGFGI) form a helical membrane-spanning segment. Topologically, residues 33–54 (YFLVQNTYGVLFRNLPFLTLGN) are extracellular. The helical transmembrane segment at 55-69 (ILVIVGSIIMVVAFL) threads the bilayer. Residues 70–80 (GCMGSIKENKC) are Cytoplasmic-facing. The helical transmembrane segment at 81–106 (LLMSFFVLLLIILLAEVTIAILLFVY) threads the bilayer. Over 107-181 (EQKLNTLVAE…NKAKSWFHSN (75 aa)) the chain is Extracellular. 3 N-linked (GlcNAc...) asparagine glycosylation sites follow: Asn119, Asn129, and Asn148. A helical transmembrane segment spans residues 182 to 206 (FLYIGIITICVCVIQVLGMSFALTL). Residues 207-219 (NCQIDKTSQALGL) are Cytoplasmic-facing.

Belongs to the tetraspanin (TM4SF) family. In terms of assembly, interacts with SCIMP. Interacts with CD45/PTPRC. Interacts with IL7R. Interacts with RBL2 and PPP2CA.

Its subcellular location is the cell membrane. It localises to the cell junction. The protein localises to the membrane. Its function is as follows. Structural component of specialized membrane microdomains known as tetraspanin-enriched microdomains (TERMs), which act as platforms for receptor clustering and signaling. Participates thereby in diverse biological functions such as cell signal transduction, adhesion, migration and protein trafficking. Plays a role in the activation of monocytes and B-cells. Acts as an essential regulator of B-cell development by promoting interleukin-7 receptor/IL7R signaling. Also promotes, in B-cells, the BCR signaling by recruiting PKC to the plasma membrane in order to phosphorylate its substrates. Plays an essential role in lymphocyte homing to lymph nodes by stabilizing L-selectin/SELL cell surface expression. Also mediates metabolic and inflammatory functions in hepatocytes and adipose tissue by promoting TNF-alpha and LPS signaling independent of the immune compartment. Protects hematopoietic stem cell function in response to stress by facilitating DREAM complex activity through association with p130/RBL2 and its phosphatase PP2A. The chain is Leukocyte surface antigen CD53 (Cd53) from Mus musculus (Mouse).